Reading from the N-terminus, the 912-residue chain is Intercellular adhesion molecule 5 (912 aa).

A signal peptide spans 1–29 (MPGPSPGLRALLGFWVALGLGILRLSAVA). Topologically, residues 30–826 (QEPFWADLQP…RITVRVAGPW (797 aa)) are extracellular. 9 consecutive Ig-like C2-type domains span residues 47–127 (GGSL…PLPP), 132–232 (GENF…RLLA), 239–324 (DSQS…LLTL), 332–395 (GKLV…NGSA), 403–481 (PRLD…VTLT), 486–561 (PALD…VAVT), 566–645 (PSFE…NPLG), 659–734 (PQMD…TVGV), and 738–819 (PVVA…RRIT). Residue Asn53 is glycosylated (N-linked (GlcNAc...) (high mannose) asparagine). Intrachain disulfides connect Cys54-Cys97 and Cys58-Cys101. A glycan (N-linked (GlcNAc...) asparagine) is linked at Asn134. Residues Cys139 and Cys195 are joined by a disulfide bond. Residues Thr179 and Thr181 each carry the phosphothreonine modification. Residues Asn192 and Asn211 are each glycosylated (N-linked (GlcNAc...) asparagine). Cys246 and Cys297 form a disulfide bridge. N-linked (GlcNAc...) asparagine glycosylation is found at Asn311, Asn366, and Asn392. An intrachain disulfide couples Cys339 to Cys378. Intrachain disulfides connect Cys410-Cys465, Cys493-Cys546, and Cys573-Cys638. Residues Asn576 and Asn639 are each glycosylated (N-linked (GlcNAc...) asparagine). A disulfide bond links Cys666 and Cys717. A disordered region spans residues 678 to 708 (AAGPACARGRPSPRVRCSREGAPRPARPRVS). N-linked (GlcNAc...) asparagine glycosylation is found at Asn756, Asn787, and Asn788. Cys761 and Cys806 form a disulfide bridge. The chain crosses the membrane as a helical span at residues 827-847 (LWIAVGGAVGGAVLLAAGAGL). Topologically, residues 848–912 (AFYVQSTACK…EVFAIQLTSA (65 aa)) are cytoplasmic. Positions 880–902 (GGAGSGAEGGPEAEDSAESPAGG) are disordered.

The protein belongs to the immunoglobulin superfamily. ICAM family. Glycosylation at Asn-53 is critical for functional folding. In terms of tissue distribution, expressed on neurons in the most rostral segment of the mammalian brain, the telencephalon.

The protein localises to the membrane. In terms of biological role, ICAM proteins are ligands for the leukocyte adhesion protein LFA-1 (integrin alpha-L/beta-2). The protein is Intercellular adhesion molecule 5 (ICAM5) of Oryctolagus cuniculus (Rabbit).